The following is a 121-amino-acid chain: Small ribosomal subunit protein uS13 (121 aa).

A disordered region spans residues 93-121 (RGLPVRGQNTKNNARTRKGPRRTVANKKK). Residues 106 to 121 (ARTRKGPRRTVANKKK) show a composition bias toward basic residues.

This sequence belongs to the universal ribosomal protein uS13 family. Part of the 30S ribosomal subunit. Forms a loose heterodimer with protein S19. Forms two bridges to the 50S subunit in the 70S ribosome.

Functionally, located at the top of the head of the 30S subunit, it contacts several helices of the 16S rRNA. In the 70S ribosome it contacts the 23S rRNA (bridge B1a) and protein L5 of the 50S subunit (bridge B1b), connecting the 2 subunits; these bridges are implicated in subunit movement. Contacts the tRNAs in the A and P-sites. This Bacillus pumilus (strain SAFR-032) protein is Small ribosomal subunit protein uS13.